A 597-amino-acid polypeptide reads, in one-letter code: Phosphoinositide phosphatase SAC7 (597 aa).

The 329-residue stretch at L130 to G458 folds into the SAC domain. Positions R393–N404 match the Phosphatase catalytic core motif. The next 2 membrane-spanning stretches (helical) occupy residues A528 to M548 and H559 to V579.

In terms of tissue distribution, ubiquitous.

Its subcellular location is the endoplasmic reticulum membrane. The protein resides in the cytoplasmic vesicle membrane. Its function is as follows. Phosphoinositide phosphatase that preferentially hydrolyzes PtdIns(4)P. Regulates the accumulation of PtdIns(4)P on membrane compartments at the tips of growing root hairs leading to proper root hair development. The protein is Phosphoinositide phosphatase SAC7 (SAC7) of Arabidopsis thaliana (Mouse-ear cress).